The sequence spans 347 residues: NADH-ubiquinone oxidoreductase chain 2 (347 aa).

9 consecutive transmembrane segments (helical) span residues 3-23 (PLAL…TMMS), 59-79 (YFMT…INLM), 93-115 (VASN…HFWV), 150-170 (NTNL…WGGL), 178-198 (ILAY…PFNP), 199-219 (TLTL…FMIL), 242-262 (IMLM…GFMP), 274-294 (NSII…YFYM), and 326-346 (LPTL…ISML).

Belongs to the complex I subunit 2 family. Core subunit of respiratory chain NADH dehydrogenase (Complex I) which is composed of 45 different subunits. Interacts with TMEM242.

The protein resides in the mitochondrion inner membrane. The enzyme catalyses a ubiquinone + NADH + 5 H(+)(in) = a ubiquinol + NAD(+) + 4 H(+)(out). Functionally, core subunit of the mitochondrial membrane respiratory chain NADH dehydrogenase (Complex I) which catalyzes electron transfer from NADH through the respiratory chain, using ubiquinone as an electron acceptor. Essential for the catalytic activity and assembly of complex I. The polypeptide is NADH-ubiquinone oxidoreductase chain 2 (Loxodonta africana (African elephant)).